Consider the following 127-residue polypeptide: Cyclin-dependent protein kinase inhibitor SIM (127 aa).

The segment at 21-71 is disordered; sequence RANTNRDDDGGGCTTPTSSDHKIPPTTATTPPPPPQKPRPPSTPSSLGIRS. The segment covering 50–63 has biased composition (pro residues); the sequence is TPPPPPQKPRPPST.

Interacts with CDKA-1. Interacts with CYCD2-1, CYCD3-2 and CYCD4-1. Interacts with CDKB1-1. Interacts with CPR5. In terms of tissue distribution, expressed in the shoot apical meristem, leaf primordia and the elongation zone of the root.

The protein resides in the nucleus. In terms of biological role, cyclin-dependent protein kinase (CDK) inhibitor that functions as a repressor of mitosis in the endoreduplication cell cycle. Inhibits the kinase activity of CYCD3-1/CDKA-1, CYCD2-1/CDKA-1 and CYCB1-1/CDKB1-1 complexes in a dose dependent manner. Cooperates with SMR1 and SMR2 to promote endoreplication during leaf development. Required for normal trichome endoreplicating cell cycles. Positive regulator of effector-triggered immunity (ETI). The sequence is that of Cyclin-dependent protein kinase inhibitor SIM from Arabidopsis thaliana (Mouse-ear cress).